The primary structure comprises 542 residues: Adenosylmethionine-8-amino-7-oxononanoate aminotransferase (542 aa).

Position 170 to 171 (170 to 171) interacts with pyridoxal 5'-phosphate; the sequence is GS. Tyrosine 205 lines the substrate pocket. Residue aspartate 311 participates in pyridoxal 5'-phosphate binding. 3 residues coordinate substrate: lysine 340, glycine 375, and arginine 470. Residue lysine 340 is modified to N6-(pyridoxal phosphate)lysine. A disordered region spans residues 509–542; sequence DGGLWTKRPDGPDNPDKANTPDTPDGARTGETVV. A compositionally biased stretch (basic and acidic residues) spans 515–524; that stretch reads KRPDGPDNPD.

This sequence belongs to the class-III pyridoxal-phosphate-dependent aminotransferase family. BioA subfamily. Homodimer. Pyridoxal 5'-phosphate serves as cofactor.

The protein localises to the cytoplasm. It carries out the reaction (8S)-8-amino-7-oxononanoate + S-adenosyl-L-methionine = S-adenosyl-4-methylsulfanyl-2-oxobutanoate + (7R,8S)-7,8-diammoniononanoate. It functions in the pathway cofactor biosynthesis; biotin biosynthesis; 7,8-diaminononanoate from 8-amino-7-oxononanoate (SAM route): step 1/1. Catalyzes the transfer of the alpha-amino group from S-adenosyl-L-methionine (SAM) to 7-keto-8-aminopelargonic acid (KAPA) to form 7,8-diaminopelargonic acid (DAPA). It is the only aminotransferase known to utilize SAM as an amino donor. This chain is Adenosylmethionine-8-amino-7-oxononanoate aminotransferase, found in Nitratidesulfovibrio vulgaris (strain ATCC 29579 / DSM 644 / CCUG 34227 / NCIMB 8303 / VKM B-1760 / Hildenborough) (Desulfovibrio vulgaris).